The chain runs to 169 residues: Small ribosomal subunit protein uS5 (169 aa).

Residues 15–79 form the S5 DRBM domain; sequence LKEQVVAINR…EAAKKNLRRI (65 aa).

The protein belongs to the universal ribosomal protein uS5 family. Part of the 30S ribosomal subunit. Contacts proteins S4 and S8.

With S4 and S12 plays an important role in translational accuracy. Functionally, located at the back of the 30S subunit body where it stabilizes the conformation of the head with respect to the body. This is Small ribosomal subunit protein uS5 from Solibacter usitatus (strain Ellin6076).